The following is a 379-amino-acid chain: Deoxyguanosinetriphosphate triphosphohydrolase-like protein (379 aa).

The HD domain maps to 69 to 200 (RLTHTIEVAQ…ANLADEIAYS (132 aa)).

It belongs to the dGTPase family. Type 2 subfamily.

In Azoarcus sp. (strain BH72), this protein is Deoxyguanosinetriphosphate triphosphohydrolase-like protein.